The sequence spans 210 residues: Fibrillarin-like rRNA/tRNA 2'-O-methyltransferase (210 aa).

S-adenosyl-L-methionine contacts are provided by residues 72–73, 88–89, 113–114, and 134–137; these read TT, EF, DA, and DVAT.

Belongs to the methyltransferase superfamily. Fibrillarin family. In terms of assembly, interacts with nop5. Component of box C/D small ribonucleoprotein (sRNP) particles that contain rpl7ae, FlpA and nop5, plus a guide RNA.

Functionally, involved in pre-rRNA and tRNA processing. Utilizes the methyl donor S-adenosyl-L-methionine to catalyze the site-specific 2'-hydroxyl methylation of ribose moieties in rRNA and tRNA. Site specificity is provided by a guide RNA that base pairs with the substrate. Methylation occurs at a characteristic distance from the sequence involved in base pairing with the guide RNA. The polypeptide is Fibrillarin-like rRNA/tRNA 2'-O-methyltransferase (Halobacterium salinarum (strain ATCC 29341 / DSM 671 / R1)).